A 95-amino-acid chain; its full sequence is MKKRGGRILWLVYLDSSVPRSRGRILPRSKAVSKPTLQEVIQALERLGYRYQVYQDKKYPALWFEERQGYIVVETSEKLRILALKVAEEVRKLRR.

This sequence belongs to the SRP19 family. As to quaternary structure, part of the signal recognition particle protein translocation system, which is composed of SRP and FtsY. Archaeal SRP consists of a 7S RNA molecule of 300 nucleotides and two protein subunits: SRP54 and SRP19.

The protein localises to the cytoplasm. Functionally, involved in targeting and insertion of nascent membrane proteins into the cytoplasmic membrane. Binds directly to 7S RNA and mediates binding of the 54 kDa subunit of the SRP. The protein is Signal recognition particle 19 kDa protein of Pyrobaculum islandicum (strain DSM 4184 / JCM 9189 / GEO3).